Consider the following 525-residue polypeptide: ATP synthase subunit alpha (525 aa).

Residue 171-178 coordinates ATP; the sequence is GDRQTGKS.

The protein belongs to the ATPase alpha/beta chains family. F-type ATPases have 2 components, CF(1) - the catalytic core - and CF(0) - the membrane proton channel. CF(1) has five subunits: alpha(3), beta(3), gamma(1), delta(1), epsilon(1). CF(0) has three main subunits: a(1), b(2) and c(9-12). The alpha and beta chains form an alternating ring which encloses part of the gamma chain. CF(1) is attached to CF(0) by a central stalk formed by the gamma and epsilon chains, while a peripheral stalk is formed by the delta and b chains.

Its subcellular location is the cell inner membrane. It catalyses the reaction ATP + H2O + 4 H(+)(in) = ADP + phosphate + 5 H(+)(out). Functionally, produces ATP from ADP in the presence of a proton gradient across the membrane. The alpha chain is a regulatory subunit. In Flavobacterium johnsoniae (strain ATCC 17061 / DSM 2064 / JCM 8514 / BCRC 14874 / CCUG 350202 / NBRC 14942 / NCIMB 11054 / UW101) (Cytophaga johnsonae), this protein is ATP synthase subunit alpha.